A 433-amino-acid chain; its full sequence is Serine--tRNA ligase (433 aa).

Residue 235–237 (TSE) coordinates L-serine. 266 to 268 (RSE) serves as a coordination point for ATP. Residue glutamate 289 participates in L-serine binding. 353–356 (EISS) is a binding site for ATP. An L-serine-binding site is contributed by serine 388.

This sequence belongs to the class-II aminoacyl-tRNA synthetase family. Type-1 seryl-tRNA synthetase subfamily. As to quaternary structure, homodimer. The tRNA molecule binds across the dimer.

The protein resides in the cytoplasm. The enzyme catalyses tRNA(Ser) + L-serine + ATP = L-seryl-tRNA(Ser) + AMP + diphosphate + H(+). It catalyses the reaction tRNA(Sec) + L-serine + ATP = L-seryl-tRNA(Sec) + AMP + diphosphate + H(+). It participates in aminoacyl-tRNA biosynthesis; selenocysteinyl-tRNA(Sec) biosynthesis; L-seryl-tRNA(Sec) from L-serine and tRNA(Sec): step 1/1. Catalyzes the attachment of serine to tRNA(Ser). Is also able to aminoacylate tRNA(Sec) with serine, to form the misacylated tRNA L-seryl-tRNA(Sec), which will be further converted into selenocysteinyl-tRNA(Sec). This chain is Serine--tRNA ligase, found in Burkholderia thailandensis (strain ATCC 700388 / DSM 13276 / CCUG 48851 / CIP 106301 / E264).